Consider the following 855-residue polypeptide: Sucrose synthase 5 (855 aa).

The interval 279–758 is GT-B glycosyltransferase; that stretch reads SIFNIVIFSI…GLQRICECYT (480 aa).

This sequence belongs to the glycosyltransferase 1 family. Plant sucrose synthase subfamily. Predominantly expressed in roots, flowers and immature seeds.

Its subcellular location is the cytoplasm. The protein localises to the membrane. The enzyme catalyses an NDP-alpha-D-glucose + D-fructose = a ribonucleoside 5'-diphosphate + sucrose + H(+). In terms of biological role, sucrose-cleaving enzyme that provides UDP-glucose and fructose for various metabolic pathways. This Oryza sativa subsp. japonica (Rice) protein is Sucrose synthase 5 (SUS5).